The following is a 323-amino-acid chain: Beta-ketoacyl-[acyl-carrier-protein] synthase III (323 aa).

Active-site residues include Cys114 and His250. An ACP-binding region spans residues 251–255 (QANRR). The active site involves Asn280.

Belongs to the thiolase-like superfamily. FabH family. In terms of assembly, homodimer.

The protein resides in the cytoplasm. It carries out the reaction malonyl-[ACP] + acetyl-CoA + H(+) = 3-oxobutanoyl-[ACP] + CO2 + CoA. The protein operates within lipid metabolism; fatty acid biosynthesis. Catalyzes the condensation reaction of fatty acid synthesis by the addition to an acyl acceptor of two carbons from malonyl-ACP. Catalyzes the first condensation reaction which initiates fatty acid synthesis and may therefore play a role in governing the total rate of fatty acid production. Possesses both acetoacetyl-ACP synthase and acetyl transacylase activities. Its substrate specificity determines the biosynthesis of branched-chain and/or straight-chain of fatty acids. This Rhodospirillum centenum (strain ATCC 51521 / SW) protein is Beta-ketoacyl-[acyl-carrier-protein] synthase III.